Here is a 619-residue protein sequence, read N- to C-terminus: Genetic interactor of prohibitins 3, mitochondrial (619 aa).

A mitochondrion-targeting transit peptide spans 1–55; sequence MLKAQIQTGLQLLQRAAVSHMRPSSCTSMLMRMRVHLAPRALQSQRSLSSSEFSP. The 211-residue stretch at 162-372 folds into the CP-type G domain; that stretch reads VAAVSDVMHS…IYDVPGFSSA (211 aa).

Belongs to the TRAFAC class YlqF/YawG GTPase family. GEP3 subfamily.

It localises to the mitochondrion. Its function is as follows. May be involved in the mitochondrial lipid metabolism. In Clavispora lusitaniae (strain ATCC 42720) (Yeast), this protein is Genetic interactor of prohibitins 3, mitochondrial (GEP3).